Consider the following 272-residue polypeptide: Putative phosphoenolpyruvate synthase regulatory protein (272 aa).

152-159 (GVSRCGKT) lines the ADP pocket.

This sequence belongs to the pyruvate, phosphate/water dikinase regulatory protein family. PSRP subfamily.

The enzyme catalyses [pyruvate, water dikinase] + ADP = [pyruvate, water dikinase]-phosphate + AMP + H(+). It catalyses the reaction [pyruvate, water dikinase]-phosphate + phosphate + H(+) = [pyruvate, water dikinase] + diphosphate. Its function is as follows. Bifunctional serine/threonine kinase and phosphorylase involved in the regulation of the phosphoenolpyruvate synthase (PEPS) by catalyzing its phosphorylation/dephosphorylation. The chain is Putative phosphoenolpyruvate synthase regulatory protein from Ectopseudomonas mendocina (strain ymp) (Pseudomonas mendocina).